The following is a 452-amino-acid chain: Translation initiation factor eIF2B subunit gamma (452 aa).

M1 carries the N-acetylmethionine modification. Phosphoserine is present on S260.

It belongs to the eIF-2B gamma/epsilon subunits family. In terms of assembly, component of the translation initiation factor 2B (eIF2B) complex which is a heterodecamer of two sets of five different subunits: alpha, beta, gamma, delta and epsilon. Subunits alpha, beta and delta comprise a regulatory subcomplex and subunits epsilon and gamma comprise a catalytic subcomplex. Within the complex, the hexameric regulatory complex resides at the center, with the two heterodimeric catalytic subcomplexes bound on opposite sides.

The protein resides in the cytoplasm. Its subcellular location is the cytosol. Its activity is regulated as follows. Activated by the chemical integrated stress response (ISR) inhibitor ISRIB which stimulates guanine nucleotide exchange factor activity for both phosphorylated and unphosphorylated eIF2. Its function is as follows. Acts as a component of the translation initiation factor 2B (eIF2B) complex, which catalyzes the exchange of GDP for GTP on the eukaryotic initiation factor 2 (eIF2) complex gamma subunit. Its guanine nucleotide exchange factor activity is repressed when bound to eIF2 complex phosphorylated on the alpha subunit, thereby limiting the amount of methionyl-initiator methionine tRNA available to the ribosome and consequently global translation is repressed. This Macaca fascicularis (Crab-eating macaque) protein is Translation initiation factor eIF2B subunit gamma (EIF2B3).